We begin with the raw amino-acid sequence, 342 residues long: MKFLDEAKVYVRSGDGGPGCVSFRREKFIEFGGPNGGDGGRGGDVWVECVEGLNTLIDYRYQQHFKAKKGEHGMGSNCHGANGADTVLKVPAGTQIFSEDGETLLADLTEVGQKIRLAKGGNGGFGNAYFTTSTNRAPKHANPGQEGQEMWIWLRLKLIADAGLVGLPNAGKSTFLASVTAAKPKIADYPFTTLHPGLGVVRSDGREFVLADIPGLIEGAHEGVGLGDKFLAHVERCRVLLHLVDGTSEHAGKTYKLVRGEIEAYGNGLAEKPEIVALSKADALDADTLKSQVAKLKRAAGRAPLILSSASRKGVPEALRALQTEIDASAEAERKPVAAWQP.

In terms of domain architecture, Obg spans 1 to 159 (MKFLDEAKVY…MWIWLRLKLI (159 aa)). Residues 160-327 (ADAGLVGLPN…ALRALQTEID (168 aa)) enclose the OBG-type G domain. GTP is bound by residues 166–173 (GLPNAGKS), 191–195 (FTTLH), 212–215 (DIPG), 279–282 (SKAD), and 308–310 (SSA). 2 residues coordinate Mg(2+): Ser173 and Thr193.

Belongs to the TRAFAC class OBG-HflX-like GTPase superfamily. OBG GTPase family. Monomer. Mg(2+) is required as a cofactor.

It is found in the cytoplasm. Functionally, an essential GTPase which binds GTP, GDP and possibly (p)ppGpp with moderate affinity, with high nucleotide exchange rates and a fairly low GTP hydrolysis rate. Plays a role in control of the cell cycle, stress response, ribosome biogenesis and in those bacteria that undergo differentiation, in morphogenesis control. In Methylobacterium radiotolerans (strain ATCC 27329 / DSM 1819 / JCM 2831 / NBRC 15690 / NCIMB 10815 / 0-1), this protein is GTPase Obg.